The sequence spans 241 residues: Large ribosomal subunit protein uL1 (241 aa).

The protein belongs to the universal ribosomal protein uL1 family. As to quaternary structure, part of the 50S ribosomal subunit.

Binds directly to 23S rRNA. The L1 stalk is quite mobile in the ribosome, and is involved in E site tRNA release. Functionally, protein L1 is also a translational repressor protein, it controls the translation of the L11 operon by binding to its mRNA. The chain is Large ribosomal subunit protein uL1 from Streptomyces coelicolor (strain ATCC BAA-471 / A3(2) / M145).